The following is a 236-amino-acid chain: MNDSNDTSVAGGAAGADSRVLSADSALTERQRTILDVIRASVTSRGYPPSIREIGDAVGLTSTSSVAHQLRTLERKGYLRRDPNRPRAVNVRGADDAALPPVTEVAGSDALPEPTFAPVLGRIAAGGPILAEEAVEDVFPLPRELVGEGTLFLLKVIGDSMVEAAICDGDWVVVRQQNVADNGDIVAAMIDGEATVKTFKRAGGQVWLMPHNPAFDPIPGNDATVLGKVVTVIRKV.

A disordered region spans residues 1–25; the sequence is MNDSNDTSVAGGAAGADSRVLSADS. The H-T-H motif DNA-binding region spans 51-71; the sequence is IREIGDAVGLTSTSSVAHQLR. Catalysis depends on for autocatalytic cleavage activity residues serine 160 and lysine 197.

It belongs to the peptidase S24 family. Homodimer.

It catalyses the reaction Hydrolysis of Ala-|-Gly bond in repressor LexA.. Functionally, represses a number of genes involved in the response to DNA damage (SOS response), including recA and lexA. In the presence of single-stranded DNA, RecA interacts with LexA causing an autocatalytic cleavage which disrupts the DNA-binding part of LexA, leading to derepression of the SOS regulon and eventually DNA repair. The polypeptide is LexA repressor (Mycobacterium bovis (strain BCG / Pasteur 1173P2)).